A 153-amino-acid chain; its full sequence is Small ribosomal subunit protein uS13 (153 aa).

This sequence belongs to the universal ribosomal protein uS13 family. Part of the 30S ribosomal subunit. Forms a loose heterodimer with protein S19. Forms two bridges to the 50S subunit in the 70S ribosome.

In terms of biological role, located at the top of the head of the 30S subunit, it contacts several helices of the 16S rRNA. In the 70S ribosome it contacts the 23S rRNA (bridge B1a) and protein L5 of the 50S subunit (bridge B1b), connecting the 2 subunits; these bridges are implicated in subunit movement. This is Small ribosomal subunit protein uS13 from Pyrobaculum calidifontis (strain DSM 21063 / JCM 11548 / VA1).